Reading from the N-terminus, the 488-residue chain is Acetyl-coenzyme A carboxylase carboxyl transferase subunit beta, chloroplastic (488 aa).

Positions 221-488 (LWIQCDNCYA…FFPLNKNEIK (268 aa)) constitute a CoA carboxyltransferase N-terminal domain. Zn(2+)-binding residues include C225, C228, C244, and C247. The C4-type zinc-finger motif lies at 225–247 (CDNCYALIYKKALKLKLNVCEQC).

This sequence belongs to the AccD/PCCB family. Acetyl-CoA carboxylase is a heterohexamer composed of biotin carboxyl carrier protein, biotin carboxylase and 2 subunits each of ACCase subunit alpha and ACCase plastid-coded subunit beta (accD). It depends on Zn(2+) as a cofactor.

The protein localises to the plastid. It is found in the chloroplast stroma. It carries out the reaction N(6)-carboxybiotinyl-L-lysyl-[protein] + acetyl-CoA = N(6)-biotinyl-L-lysyl-[protein] + malonyl-CoA. Its pathway is lipid metabolism; malonyl-CoA biosynthesis; malonyl-CoA from acetyl-CoA: step 1/1. In terms of biological role, component of the acetyl coenzyme A carboxylase (ACC) complex. Biotin carboxylase (BC) catalyzes the carboxylation of biotin on its carrier protein (BCCP) and then the CO(2) group is transferred by the transcarboxylase to acetyl-CoA to form malonyl-CoA. The sequence is that of Acetyl-coenzyme A carboxylase carboxyl transferase subunit beta, chloroplastic from Aethionema grandiflorum (Persian stone-cress).